The following is a 246-amino-acid chain: Ribonuclease PH (246 aa).

Phosphate contacts are provided by residues Arg91 and 129–131 (GTR).

This sequence belongs to the RNase PH family. As to quaternary structure, homohexameric ring arranged as a trimer of dimers.

The enzyme catalyses tRNA(n+1) + phosphate = tRNA(n) + a ribonucleoside 5'-diphosphate. Functionally, phosphorolytic 3'-5' exoribonuclease that plays an important role in tRNA 3'-end maturation. Removes nucleotide residues following the 3'-CCA terminus of tRNAs; can also add nucleotides to the ends of RNA molecules by using nucleoside diphosphates as substrates, but this may not be physiologically important. Probably plays a role in initiation of 16S rRNA degradation (leading to ribosome degradation) during starvation. The polypeptide is Ribonuclease PH (Burkholderia vietnamiensis (strain G4 / LMG 22486) (Burkholderia cepacia (strain R1808))).